A 208-amino-acid polypeptide reads, in one-letter code: CRVRQCALGVHESCPLARGAKLSPGQHPRPSHAVRGRTAPGTRSSRRRTCEDGTSGPRDPRGATVALLYPLCDQPSAHLQTLPLEHRPLFRVIVEASRESSRKGDAPPSRRTGTRIHRELKLAHNQWLRANRESAIWPWRTAAMNFVAALAPRLQTHQHMHDLLMTCAFWCCLAHAATCSCAGLYSTHCRHLFRAFGCGGPASATASG.

The disordered stretch occupies residues 17–61 (ARGAKLSPGQHPRPSHAVRGRTAPGTRSSRRRTCEDGTSGPRDPR). Residues 167–179 (CAFWCCLAHAATC) fold into a zinc finger.

The protein belongs to the herpesviridae US10 family. Post-translationally, phosphorylated.

Its subcellular location is the virion tegument. The protein localises to the host nucleus matrix. The sequence is that of Virion protein US10 homolog from Homo sapiens (Human).